Here is a 30-residue protein sequence, read N- to C-terminus: MICYSHKTPQPSATIGCEEKTCYKKSVRKL.

Cysteines 3 and 22 form a disulfide.

The protein belongs to the three-finger toxin family. Short-chain subfamily. Orphan group XI sub-subfamily. Contains 4 disulfide bonds. Expressed by the venom gland.

It is found in the secreted. In terms of biological role, blocks voltage-gated potassium channels (Kv). This is the slowly inactivating phase of potassium efflux which is blocked by this toxin. The protein is Dendrotoxin B of Dendroaspis angusticeps (Eastern green mamba).